We begin with the raw amino-acid sequence, 240 residues long: Putative protein FAM10A4 (240 aa).

Residues 38–94 (MGGTATQKAKSEENTKEEKPDSKVEEDLKADEPSSEESDLEIDKEGVIEPDTDAPQE) form a disordered region. A compositionally biased stretch (basic and acidic residues) spans 46 to 69 (AKSEENTKEEKPDSKVEEDLKADE). Acidic residues predominate over residues 85 to 94 (IEPDTDAPQE). TPR repeat units lie at residues 110 to 143 (ANDKKVAAIEALNDGELQKAIDLFTDAIKLNPRL), 145 to 177 (ILYAKRASVFVKLQKPNAAIRDCDRAIEINPDS), and 179 to 211 (QPYKRRGKAHRLLGHWEEAAHDLALACKFDYDE). The interval 220–240 (VQPRAQKIAEHQRKYERKREE) is disordered. Positions 226-240 (KIAEHQRKYERKREE) are enriched in basic and acidic residues.

The protein belongs to the FAM10 family. In terms of tissue distribution, highly expressed in bone marrow and weakly in placenta, pancreas, heart and HeLa cell line.

Its subcellular location is the cytoplasm. This chain is Putative protein FAM10A4 (ST13P4), found in Homo sapiens (Human).